Here is a 318-residue protein sequence, read N- to C-terminus: Ubiquinone biosynthesis protein COQ9, mitochondrial (318 aa).

The transit peptide at 1-44 (MAAAAVSGALGRAGWRLLQLRCLPVARCRQALVPRAFHASAVGL) directs the protein to the mitochondrion. The SIFI-degron motif lies at 16–31 (RLLQLRCLPVARCRQA). Positions 44–98 (LRSSDEQKQQPPNSFSQQHSETQGAEKPDPESSHSPPRYTDQGGEEEEDYESEEQ) are disordered. The segment covering 52 to 66 (QQPPNSFSQQHSETQ) has biased composition (polar residues). The span at 86 to 97 (GGEEEEDYESEE) shows a compositional bias: acidic residues. Residue Lys-175 is modified to N6-acetyllysine. Position 244 (Arg-244) interacts with a 1,2-diacylglycero-3-phosphoethanolamine.

It belongs to the COQ9 family. In terms of assembly, homodimer. Heterodimer; two heterodimers of COQ7:COQ9 come together on the same side of the lipid pseudo-bilayer and form a curved tetramer with a hydrophobic surface suitable for membrane interaction. These two tetramers assemble into a soluble octamer with a pseudo-bilayer of lipids captured within. Interacts with COQ7; this interaction allows ubiquinone (CoQ) isoprene intermediates presentation to COQ7 and facilitates the COQ7-mediated hydroxylase step. In terms of processing, in response to mitochondrial stress, the precursor protein is ubiquitinated by the SIFI complex in the cytoplasm before mitochondrial import, leading to its degradation. Within the SIFI complex, UBR4 initiates ubiquitin chain that are further elongated or branched by KCMF1.

Its subcellular location is the mitochondrion. The protein operates within cofactor biosynthesis; ubiquinone biosynthesis. In terms of biological role, membrane-associated protein that warps the membrane surface to access and bind aromatic isoprenes with high specificity, including ubiquinone (CoQ) isoprene intermediates and presents them directly to COQ7, therefore facilitating the COQ7-mediated hydroxylase step. Participates in the biosynthesis of coenzyme Q, also named ubiquinone, an essential lipid-soluble electron transporter for aerobic cellular respiration. The sequence is that of Ubiquinone biosynthesis protein COQ9, mitochondrial from Homo sapiens (Human).